The chain runs to 204 residues: Large ribosomal subunit protein bL9 (204 aa).

The interval 180–204 (DDIGGAASDDEGDAPAAAADEEESK) is disordered. Acidic residues predominate over residues 187-204 (SDDEGDAPAAAADEEESK).

Belongs to the bacterial ribosomal protein bL9 family.

Functionally, binds to the 23S rRNA. In Ruegeria sp. (strain TM1040) (Silicibacter sp.), this protein is Large ribosomal subunit protein bL9.